Here is a 50-residue protein sequence, read N- to C-terminus: Insulin 2 (50 aa).

Cystine bridges form between Cys-8/Cys-36, Cys-20/Cys-49, and Cys-35/Cys-40.

This sequence belongs to the insulin family. Heterodimer of a B chain and an A chain linked by two disulfide bonds.

The protein localises to the secreted. In terms of biological role, insulin decreases blood glucose concentration. It increases cell permeability to monosaccharides, amino acids and fatty acids. It accelerates glycolysis, the pentose phosphate cycle, and glycogen synthesis in liver. The protein is Insulin 2 (ins2) of Batrachoididae sp. (Toadfish).